The primary structure comprises 467 residues: A-type ATP synthase subunit B (467 aa).

The protein belongs to the ATPase alpha/beta chains family. Has multiple subunits with at least A(3), B(3), C, D, E, F, H, I and proteolipid K(x).

It is found in the cell membrane. Functionally, component of the A-type ATP synthase that produces ATP from ADP in the presence of a proton gradient across the membrane. The B chain is a regulatory subunit. This Methanosphaera stadtmanae (strain ATCC 43021 / DSM 3091 / JCM 11832 / MCB-3) protein is A-type ATP synthase subunit B.